A 76-amino-acid chain; its full sequence is Conotoxin Cal5a L2 (76 aa).

Positions 1–22 (MRFYIGLMAALMLTSILRTDSA) are cleaved as a signal peptide. Positions 23 to 42 (SVGQTGTKSELALIERVIRQ) are excised as a propeptide. Proline 50 bears the 4-hydroxyproline mark. Residues proline 58, proline 62, and proline 64 each carry the 4-hydroxyproline; partial modification.

It belongs to the conotoxin T superfamily. Post-translationally, contains 2 disulfide bonds that can be either 'C1-C3, C2-C4' or 'C1-C4, C2-C3', since these disulfide connectivities have been observed for conotoxins with cysteine framework V (for examples, see AC P0DQQ7 and AC P81755). As to expression, expressed by the venom duct.

The protein resides in the secreted. Its function is as follows. Probable neurotoxin with unknown target. Possibly targets ion channels. In Californiconus californicus (California cone), this protein is Conotoxin Cal5a L2.